Consider the following 417-residue polypeptide: Tryptophan synthase beta chain (417 aa).

At K99 the chain carries N6-(pyridoxal phosphate)lysine.

Belongs to the TrpB family. In terms of assembly, tetramer of two alpha and two beta chains. The cofactor is pyridoxal 5'-phosphate.

It carries out the reaction (1S,2R)-1-C-(indol-3-yl)glycerol 3-phosphate + L-serine = D-glyceraldehyde 3-phosphate + L-tryptophan + H2O. It participates in amino-acid biosynthesis; L-tryptophan biosynthesis; L-tryptophan from chorismate: step 5/5. Functionally, the beta subunit is responsible for the synthesis of L-tryptophan from indole and L-serine. The polypeptide is Tryptophan synthase beta chain (Corynebacterium glutamicum (strain R)).